The chain runs to 507 residues: Phosphoprotein (507 aa).

The interaction with N0 stretch occupies residues 1–48; the sequence is MAEEQARHVKNGLECIRALKAEPIGSLAIEEAMAAWSEISDNPGQERA. Disordered regions lie at residues 41–99, 134–163, 201–231, and 250–273; these read DNPG…PPRN, GLDG…TEGY, NNFP…IKKG, and GATQ…GNVP. Ser-86 is subject to Phosphoserine. Positions 134–145 are enriched in low complexity; the sequence is GLDGDSTLSGGD. The segment covering 146-160 has biased composition (acidic residues); the sequence is NESENSDVDIGEPDT. Ser-151 carries the phosphoserine modification. Positions 260 to 270 are enriched in low complexity; that stretch reads SEPSGPGAPAG. The multimerization stretch occupies residues 304-376; the sequence is GDYYDDELFS…LSSIMIAIPG (73 aa). Interaction with the L polymerase stretches follow at residues 361–377 and 396–410; these read STLE…IPGL and PIIG…AEVL. The segment at 457 to 507 is x domain (XD); that stretch reads GPASRSVIRSIIKSSRLEEDRKRYLMTLLDDIKGANDLAKFHQMLMKIIMK. Residues 459 to 507 form an interaction with the nucleocapsid (N-RNA) region; sequence ASRSVIRSIIKSSRLEEDRKRYLMTLLDDIKGANDLAKFHQMLMKIIMK.

Belongs to the morbillivirus P protein family. Homotetramer. Interacts (via multimerization domain and XD domain) with polymerase L; this interaction forms the polymerase L-P complex. Interacts (via N-terminus) with N0 (via Ncore); this interaction allows P to chaperon N0 to avoid N polymerization and non-specific RNA binding before encapsidation. Interacts (via C-terminus) with N-RNA template (via Ntail); this interaction maintains the P/L complex anchored to the nucleocapsid template during the sequential transcription. Interacts (via C-terminus) with protein C this interaction allows C to associate with the ribonucleocapsid. In terms of processing, phosphorylation on serines by host CK2 is necessary for the formation of viral factories.

Functionally, essential cofactor of the RNA polymerase L that plays a central role in the transcription and replication by forming the polymerase complex with RNA polymerase L and recruiting L to the genomic N-RNA template for RNA synthesis. Also plays a central role in the encapsidation of nascent RNA chains by forming the encapsidation complex with the nucleocapsid protein N (N-P complex). Acts as a chaperone for newly synthesized free N protein, so-called N0, allowing encapsidation of nascent RNA chains during replication. The nucleoprotein protein N prevents excessive phosphorylation of P, which leads to down-regulation of viral transcription/ replication. Participates, together with N, in the formation of viral factories (viroplasms), which are large inclusions in the host cytoplasm where replication takes place. The polypeptide is Phosphoprotein (P/V) (Measles virus (strain Edmonston-AIK-C vaccine) (MeV)).